A 110-amino-acid polypeptide reads, in one-letter code: Inner kinetochore subunit mhf1 (110 aa).

The protein belongs to the TAF9 family. CENP-S/MHF1 subfamily. As to quaternary structure, the MHF histone-fold complex is a heterotetramer of 2 mhf1-mhf2 heterodimers. Component of the inner kinetochore constitutive centromere-associated network (CCAN) (also known as central kinetochore Sim4 complex in fission yeast), which is composed of at least cnl2, cnp3, cnp20, fta1, fta2, fta3, fta4, fta6, fta7, mal2, mhf1, mhf2, mis6, mis15, mis17, sim4 and wip1.

The protein resides in the nucleus. Its function is as follows. Component of a FANCM-MHF complex that promotes gene conversion at blocked replication forks, probably by reversal of the stalled fork. FANCM-MHF promotes non-crossover recombination. This is Inner kinetochore subunit mhf1 from Schizosaccharomyces pombe (strain 972 / ATCC 24843) (Fission yeast).